The chain runs to 334 residues: Phospholipase A1 2 (334 aa).

The signal sequence occupies residues 1–23; sequence MMNLKYLLFFCLVQALHYCYAYG. A propeptide spanning residues 24-33 is cleaved from the precursor; sequence DPSLSNELDR. C37 and C120 are oxidised to a cystine. The Nucleophile role is filled by S170. The active-site Charge relay system is D198. Cystine bridges form between C209-C214 and C252-C261. The active-site Charge relay system is H263. Intrachain disulfides connect C278-C302, C279-C327, and C295-C300.

The protein belongs to the AB hydrolase superfamily. Lipase family. Post-translationally, not glycosylated. In terms of tissue distribution, expressed by the venom gland.

It localises to the secreted. It carries out the reaction a 1,2-diacyl-sn-glycero-3-phosphocholine + H2O = a 2-acyl-sn-glycero-3-phosphocholine + a fatty acid + H(+). Catalyzes the hydrolysis of phosphatidylcholine with phospholipase A1 activity (6.3 U/ml). May act as an allergen and induce hemolytic activity. This chain is Phospholipase A1 2, found in Vespa affinis (Lesser banded hornet).